The sequence spans 188 residues: Elongation factor P (188 aa).

N6-(3,6-diaminohexanoyl)-5-hydroxylysine is present on lysine 34.

Belongs to the elongation factor P family. In terms of processing, may be beta-lysylated on the epsilon-amino group of Lys-34 by the combined action of EpmA and EpmB, and then hydroxylated on the C5 position of the same residue by EpmC (if this protein is present). Lysylation is critical for the stimulatory effect of EF-P on peptide-bond formation. The lysylation moiety may extend toward the peptidyltransferase center and stabilize the terminal 3-CCA end of the tRNA. Hydroxylation of the C5 position on Lys-34 may allow additional potential stabilizing hydrogen-bond interactions with the P-tRNA.

The protein localises to the cytoplasm. It functions in the pathway protein biosynthesis; polypeptide chain elongation. In terms of biological role, involved in peptide bond synthesis. Alleviates ribosome stalling that occurs when 3 or more consecutive Pro residues or the sequence PPG is present in a protein, possibly by augmenting the peptidyl transferase activity of the ribosome. Modification of Lys-34 is required for alleviation. This is Elongation factor P from Photobacterium profundum (strain SS9).